The primary structure comprises 440 residues: Xaa-Pro dipeptidase (440 aa).

Residues Asp-244, Asp-255, His-336, Glu-381, and Glu-420 each coordinate Mn(2+).

Belongs to the peptidase M24B family. Bacterial-type prolidase subfamily. It depends on Mn(2+) as a cofactor.

It carries out the reaction Xaa-L-Pro dipeptide + H2O = an L-alpha-amino acid + L-proline. Its function is as follows. Splits dipeptides with a prolyl residue in the C-terminal position. The chain is Xaa-Pro dipeptidase from Pseudoalteromonas translucida (strain TAC 125).